The chain runs to 158 residues: NAD(P)H-quinone oxidoreductase subunit J, chloroplastic (158 aa).

This sequence belongs to the complex I 30 kDa subunit family. In terms of assembly, NDH is composed of at least 16 different subunits, 5 of which are encoded in the nucleus.

It is found in the plastid. Its subcellular location is the chloroplast thylakoid membrane. It carries out the reaction a plastoquinone + NADH + (n+1) H(+)(in) = a plastoquinol + NAD(+) + n H(+)(out). The enzyme catalyses a plastoquinone + NADPH + (n+1) H(+)(in) = a plastoquinol + NADP(+) + n H(+)(out). In terms of biological role, NDH shuttles electrons from NAD(P)H:plastoquinone, via FMN and iron-sulfur (Fe-S) centers, to quinones in the photosynthetic chain and possibly in a chloroplast respiratory chain. The immediate electron acceptor for the enzyme in this species is believed to be plastoquinone. Couples the redox reaction to proton translocation, and thus conserves the redox energy in a proton gradient. The polypeptide is NAD(P)H-quinone oxidoreductase subunit J, chloroplastic (Angiopteris evecta (Mule's foot fern)).